Consider the following 186-residue polypeptide: Phosphoheptose isomerase 1 (186 aa).

Residues Leu-33 to Phe-186 form the SIS domain. A substrate-binding site is contributed by Asn-48 to Gly-50. Zn(2+) is bound by residues His-57 and Glu-61. Substrate is bound by residues Glu-61, Asn-90 to Asp-91, Ser-116 to Ser-118, Ser-121, and Gln-168. Zn(2+) is bound by residues Gln-168 and His-176.

This sequence belongs to the SIS family. GmhA subfamily. As to quaternary structure, homotetramer. Requires Zn(2+) as cofactor.

Its subcellular location is the cytoplasm. The enzyme catalyses 2 D-sedoheptulose 7-phosphate = D-glycero-alpha-D-manno-heptose 7-phosphate + D-glycero-beta-D-manno-heptose 7-phosphate. It functions in the pathway carbohydrate biosynthesis; D-glycero-D-manno-heptose 7-phosphate biosynthesis; D-glycero-alpha-D-manno-heptose 7-phosphate and D-glycero-beta-D-manno-heptose 7-phosphate from sedoheptulose 7-phosphate: step 1/1. It participates in bacterial outer membrane biogenesis; LOS core biosynthesis. Functionally, catalyzes the isomerization of sedoheptulose 7-phosphate in D-glycero-D-manno-heptose 7-phosphate. The chain is Phosphoheptose isomerase 1 (gmhA1) from Campylobacter jejuni subsp. jejuni serotype O:2 (strain ATCC 700819 / NCTC 11168).